The sequence spans 1422 residues: Guanine nucleotide exchange factor subunit RIC1 (1422 aa).

WD repeat units follow at residues 64–103 (TQFGSYKQAEWRPDSTMIAVSTANGYILFFHITSSRGDKY) and 304–343 (NKTGAVKLIRWSPDNSAVIVTWEYGGLSLWSVFGAQLICT). Disordered stretches follow at residues 442–462 (NPKYSSARAERMPRHEKSPFA) and 986–1005 (SGESETPPSTPTSQEPSSSG). Basic and acidic residues predominate over residues 449–460 (RAERMPRHEKSP). Residues Thr991 and Thr995 each carry the phosphothreonine modification. Ser1014, Ser1016, Ser1018, Ser1036, and Ser1171 each carry phosphoserine. Residues 1021–1048 (AENVPPGKFGLQKTLSMPTGPSGKRWSK) are disordered. Disordered stretches follow at residues 1179-1198 (THRDTDRASSPGPQMQDAFL) and 1355-1422 (DTFQ…CSVS). Residues 1378 to 1396 (GSCSHGSISQSEPGSNNVV) show a composition bias toward polar residues. The span at 1403-1412 (TTQADEEEPL) shows a compositional bias: acidic residues.

It belongs to the RIC1 family. In terms of assembly, forms a complex with RGP1; the interaction enhances RAB6A GTPase activity. Interacts (via central domain) with RGP1. Interacts with RAB6A; the interaction is direct with a preference for RAB6A-GDP. Interacts (via C-terminus domain) with RAB33B; the interaction is direct with a preference for RAB33B-GTP. Interacts with GJA1. In terms of tissue distribution, expressed in the eye lens.

It localises to the cytoplasm. It is found in the cytosol. Its subcellular location is the membrane. In terms of biological role, the RIC1-RGP1 complex acts as a guanine nucleotide exchange factor (GEF), which activates RAB6A by exchanging bound GDP for free GTP, and may thereby be required for efficient fusion of endosome-derived vesicles with the Golgi compartment. The RIC1-RGP1 complex participates in the recycling of mannose-6-phosphate receptors. Required for phosphorylation and localization of GJA1. Is a regulator of procollagen transport and secretion, and is required for correct cartilage morphogenesis and development of the craniofacial skeleton. This chain is Guanine nucleotide exchange factor subunit RIC1, found in Mus musculus (Mouse).